The primary structure comprises 119 residues: uncharacterized protein (119 aa).

This sequence to Synechocystis PCC 6803 slr0903.

This is an uncharacterized protein from Methanocaldococcus jannaschii (strain ATCC 43067 / DSM 2661 / JAL-1 / JCM 10045 / NBRC 100440) (Methanococcus jannaschii).